The primary structure comprises 194 residues: FK506-binding protein 3 (194 aa).

An N-terminal signal peptide occupies residues methionine 1–serine 19. A PPIase FKBP-type domain is found at glycine 44–glutamate 133. A helical membrane pass occupies residues valine 148–isoleucine 168. The disordered stretch occupies residues aspartate 173–asparagine 194. Residues lysine 184 to asparagine 194 are compositionally biased toward basic residues.

It belongs to the FKBP-type PPIase family.

It localises to the membrane. It carries out the reaction [protein]-peptidylproline (omega=180) = [protein]-peptidylproline (omega=0). With respect to regulation, inhibited by both FK506 and rapamycin. Its function is as follows. PPIases accelerate the folding of proteins by catalyzing the cis-trans isomerization of proline imidic peptide bonds in oligopeptides. This chain is FK506-binding protein 3 (fkbp3), found in Dictyostelium discoideum (Social amoeba).